A 296-amino-acid polypeptide reads, in one-letter code: Arginase (296 aa).

Histidine 97, aspartate 120, histidine 122, and aspartate 124 together coordinate Mn(2+). Residues 122–126 (HGDLN), 133–135 (SGN), and aspartate 176 each bind substrate. Aspartate 223 and aspartate 225 together coordinate Mn(2+). Positions 237 and 268 each coordinate substrate.

The protein belongs to the arginase family. The cofactor is Mn(2+).

It catalyses the reaction L-arginine + H2O = urea + L-ornithine. Its pathway is nitrogen metabolism; urea cycle; L-ornithine and urea from L-arginine: step 1/1. Its function is as follows. Involved in the catabolism of arginine. In Bacillus subtilis (strain 168), this protein is Arginase.